Here is a 220-residue protein sequence, read N- to C-terminus: Peptidoglycan hydrolase gp5 (220 aa).

This sequence belongs to the peptidase U40 family. Monomer.

It is found in the virion. Muralytic enzyme exposed to host peptidoglycan layer after membrane fusion during viral entry. Functions as an exolysin that cleaves the peptide bridge formed by meso-diaminopimelic acid and D-alanine. Also lyses the host cell late in infection to release the virions. The sequence is that of Peptidoglycan hydrolase gp5 (P5) from Pseudomonas savastanoi pv. phaseolicola (Pseudomonas syringae pv. phaseolicola).